A 67-amino-acid chain; its full sequence is MKVKELREMTDVELRKKLADTKDELFRLRFQSATGQLDNPMKIQEVRRRIARVKTVLRERELGIKHA.

It belongs to the universal ribosomal protein uL29 family.

In Desulforudis audaxviator (strain MP104C), this protein is Large ribosomal subunit protein uL29.